We begin with the raw amino-acid sequence, 1023 residues long: RTX-I toxin determinant A from serotypes 5/10 (1023 aa).

3 consecutive transmembrane segments (helical) span residues 226–256 (NNLP…ILSN), 297–326 (STTA…ADKF), and 367–406 (INSV…SGIL). Hemolysin-type calcium-binding repeat units lie at residues 730 to 747 (FGSR…DDEI), 748 to 765 (YGND…NDVI), 766 to 783 (HGGD…NDRL), 784 to 801 (IGGK…DDEL), 812 to 829 (LGGA…TNLF), and 830 to 847 (DGGV…KDIY).

This sequence belongs to the RTX prokaryotic toxin (TC 1.C.11) family. Post-translationally, palmitoylated by ApxIC. The toxin only becomes active when modified.

It is found in the secreted. The protein localises to the host cell membrane. Its function is as follows. One of the virulence factors of A.pleuropneumoniae, which has a strong hemolytic activity and is cytotoxic for alveolar macrophages and neutrophils. This Actinobacillus pleuropneumoniae (Haemophilus pleuropneumoniae) protein is RTX-I toxin determinant A from serotypes 5/10 (apxIA).